Reading from the N-terminus, the 592-residue chain is MEMYETLGKVGEGSYGTVMKCKHKNTGQIVAIKIFYERPEQSVNKIAMREIKFLKQFHHENLVNLIEVFRQKKKIHLVFEFIDHTVLDELQHYCHGLESKRLRKYLFQILRAIDYLHSNNIIHRDIKPENILVSQSGITKLCDFGFARTLAAPGDIYTDYVATRWYRAPELVLKDTSYGKPVDIWALGCMIIEMATGNPYLPSSSDLDLLHKIVLKVGNLSPHLQNIFSKSPIFAGVVLPQVQHPKNARKKYPKLNGLLADIVHACLQIDPADRISSSDLLHHEYFTRDGFIEKFMPELKAKLLQEAKVNSLIKPKESSKENELRKDERKTVYTNTLLSSSVLGKEIEKEKKPKEIKVRVIKVKGGRGDISEPKKKEYEGGLGQQDANENVHPMSPDTKLVTIEPPNPINPSTNCNGLKENPHCGGSVTMPPINLTNSNLMAANLSSNLFHPSVRLTERAKKRRTSSQSIGQVMPNSRQEDPGPIQSQMEKGIFNERTGHSDQMANENKRKLNFSRSDRKEFHFPELPVTIQSKDTKGMEVKQIKMLKRESKKTESSKIPTLLNVDQNQEKQEGGDGHCEGKNLKRNRFFFW.

A Protein kinase domain is found at Tyr-4 to Phe-286. Residues Val-10–Val-18 and Lys-33 each bind ATP. The [NKR]KIAxRE signature appears at Asn-44 to Glu-50. The Proton acceptor role is filled by Asp-125. Thr-158 is modified (phosphothreonine). Tyr-160 carries the post-translational modification Phosphotyrosine. Basic and acidic residues predominate over residues Gly-368 to Glu-379. Disordered regions lie at residues Gly-368–Asn-390 and Arg-459–Ile-485. A compositionally biased stretch (polar residues) spans Ser-466–Ser-477.

Belongs to the protein kinase superfamily. CMGC Ser/Thr protein kinase family. CDC2/CDKX subfamily.

It localises to the cytoplasm. The catalysed reaction is L-seryl-[protein] + ATP = O-phospho-L-seryl-[protein] + ADP + H(+). It carries out the reaction L-threonyl-[protein] + ATP = O-phospho-L-threonyl-[protein] + ADP + H(+). The protein is Cyclin-dependent kinase-like 3 of Homo sapiens (Human).